Here is a 364-residue protein sequence, read N- to C-terminus: Glycine oxidase (364 aa).

FAD-binding positions include 12 to 13 (VI), 32 to 33 (ER), 40 to 41 (AS), 45 to 47 (GGI), and valine 173. A substrate-binding site is contributed by arginine 302. Residue 327 to 333 (HYRNGLV) participates in FAD binding.

Belongs to the DAO family. ThiO subfamily. In terms of assembly, monomer. It depends on FAD as a cofactor.

It carries out the reaction glycine + O2 + H2O = glyoxylate + H2O2 + NH4(+). The enzyme catalyses sarcosine + O2 + H2O = methylamine + glyoxylate + H2O2. It functions in the pathway cofactor biosynthesis; thiamine diphosphate biosynthesis. Its function is as follows. Catalyzes the oxidation of glycine, leading to glyoxyl imine and hydrogen peroxide as primary products; glyoxyl imine is used for the biosynthesis of the thiazole ring of thiamine. Otherwise, glyoxyl imine is spontaneously hydrolyzed in water to produce glyoxylate and ammonia. Can also use sarcosine (N-methylglycine) as substrate. This chain is Glycine oxidase, found in Pseudomonas aeruginosa (strain ATCC 15692 / DSM 22644 / CIP 104116 / JCM 14847 / LMG 12228 / 1C / PRS 101 / PAO1).